A 352-amino-acid chain; its full sequence is Transcriptional regulatory protein AlgP (352 aa).

The interval 128-352 (KALESRKAKP…SNGAAPTSAS (225 aa)) is disordered. Residues 138 to 341 (ATKPAAKAAA…SSAASATPAA (204 aa)) show a composition bias toward low complexity.

In terms of biological role, the promoter for a critical alginate biosynthetic gene, AlgD, encoding GDP-mannose dehydrogenase, is activated only under conditions reminiscent of the cystic fibrosis lung (i.e. under high osmolarity), and at least two regulatory genes, AlgP and AlgQ, have been implicated in this activation process. This Pseudomonas aeruginosa (strain ATCC 15692 / DSM 22644 / CIP 104116 / JCM 14847 / LMG 12228 / 1C / PRS 101 / PAO1) protein is Transcriptional regulatory protein AlgP (algP).